A 207-amino-acid chain; its full sequence is MSNPFAGNTDPISNALIPMVVEQTAKGERSYDIYSRLLKERVIFLTGPVEDHVANVIAAQLLFLESESPEKDIFIYINSPGGSISAGMAIYDTMQFIKPDVSTVCMGMAASMGAFLLASGAPGKRHCLPNAKVMIHQPLGGFQGQASDFEIHAKEILATKHRMNELLAFHTGKDIEIIAQDTDRDNFMRASEAVEYGIVDSVLTHRK.

S111 acts as the Nucleophile in catalysis. The active site involves H136.

Belongs to the peptidase S14 family. As to quaternary structure, fourteen ClpP subunits assemble into 2 heptameric rings which stack back to back to give a disk-like structure with a central cavity, resembling the structure of eukaryotic proteasomes.

The protein resides in the cytoplasm. The catalysed reaction is Hydrolysis of proteins to small peptides in the presence of ATP and magnesium. alpha-casein is the usual test substrate. In the absence of ATP, only oligopeptides shorter than five residues are hydrolyzed (such as succinyl-Leu-Tyr-|-NHMec, and Leu-Tyr-Leu-|-Tyr-Trp, in which cleavage of the -Tyr-|-Leu- and -Tyr-|-Trp bonds also occurs).. In terms of biological role, cleaves peptides in various proteins in a process that requires ATP hydrolysis. Has a chymotrypsin-like activity. Plays a major role in the degradation of misfolded proteins. This Psychromonas ingrahamii (strain DSM 17664 / CCUG 51855 / 37) protein is ATP-dependent Clp protease proteolytic subunit.